The following is a 367-amino-acid chain: Cobalt-precorrin-5B C(1)-methyltransferase (367 aa).

Belongs to the CbiD family.

The catalysed reaction is Co-precorrin-5B + S-adenosyl-L-methionine = Co-precorrin-6A + S-adenosyl-L-homocysteine. The protein operates within cofactor biosynthesis; adenosylcobalamin biosynthesis; cob(II)yrinate a,c-diamide from sirohydrochlorin (anaerobic route): step 6/10. Catalyzes the methylation of C-1 in cobalt-precorrin-5B to form cobalt-precorrin-6A. The polypeptide is Cobalt-precorrin-5B C(1)-methyltransferase (Leptospira interrogans serogroup Icterohaemorrhagiae serovar Lai (strain 56601)).